Consider the following 656-residue polypeptide: Fidgetin-like protein 1 (656 aa).

Residues 293–302 are compositionally biased toward polar residues; it reads KYSNQPQRNP. The interval 293-354 is disordered; sequence KYSNQPQRNP…QGNSEMNAPS (62 aa). Basic and acidic residues predominate over residues 331–340; sequence RQEDVQDSNR. ATP-binding positions include Ala-386 and 426–431; that span reads GTGKTL.

The protein belongs to the AAA ATPase family. Hexamer. The cofactor is Mg(2+).

The protein localises to the nucleus. It is found in the cytoplasm. Its subcellular location is the perinuclear region. It carries out the reaction ATP + H2O = ADP + phosphate + H(+). May be involved in DNA double-strand break (DBS) repair via homologous recombination (HR). May regulate osteoblast proliferation and differentiation. In Xenopus tropicalis (Western clawed frog), this protein is Fidgetin-like protein 1 (fignl1).